The sequence spans 245 residues: Acetylglutamate kinase (245 aa).

Residues 41 to 42 (GG), arginine 63, and asparagine 156 contribute to the substrate site.

This sequence belongs to the acetylglutamate kinase family. ArgB subfamily.

Its subcellular location is the cytoplasm. It carries out the reaction N-acetyl-L-glutamate + ATP = N-acetyl-L-glutamyl 5-phosphate + ADP. It participates in amino-acid biosynthesis; L-arginine biosynthesis; N(2)-acetyl-L-ornithine from L-glutamate: step 2/4. Functionally, catalyzes the ATP-dependent phosphorylation of N-acetyl-L-glutamate. The chain is Acetylglutamate kinase from Streptococcus sanguinis (strain SK36).